The primary structure comprises 625 residues: MACYIYQLPSWVLDDPCRNMDALSEWDWMEFASYVITDLTQLRKIKSMERVQGVSITRELLWWWGMRQATVRQLVDLLCRLELYRAAQIILNWKPAPEIRCPIPAFPDSVKPEKPLAASVKKAENEQEEGQPVRMATFPGPGSSPARAHQPAFLQPPEEDAPHSLRTDLPTSSDSKDFSTSIPKQEKLLSLAGDSLFWSEADVVQATDDFNQNHKISQGTFADVYRGYRHGTPFVFKKLRETACSSPGSIERFFQAELQICLRCCHPNVLPVLGFCAARQFHSFIYPYMANGSLQDRLQGQGGSDPLPWPQRVSICSGLLCAVEYLHGLEIIHSNVKSSNVLLDQNLTPKLAHPMAHLCPVNKRSKYTMMKTHLFRTSAAYLPEDFIRVGQLTKRVDIFSCGIVLAEVLTGIPAMDNNRSPVYLKDLLLSEIPSSTASPCSRKTGVENVMAKEICQKYLEKGAGRLPEDCAEALATAACLCLRKRNTSLQEVRGSVAAVEEWLRGREMLLPWSGLSEGTGSSSNTPEETDDVDNSSLDASSSVSVAPWAGAATPLLPTENGEGRLRVIVRREADSSSEACVGPEPPQDVTETSWQIDINEAKRKLMENILLYKEEKLDSIELFGP.

In terms of domain architecture, Death spans 13-94 (LDDPCRNMDA…RAAQIILNWK (82 aa)). The interval 111 to 181 (KPEKPLAASV…SSDSKDFSTS (71 aa)) is disordered. Ser-144 is subject to Phosphoserine. A compositionally biased stretch (polar residues) spans 169-181 (LPTSSDSKDFSTS). In terms of domain architecture, Protein kinase spans 210–503 (FNQNHKISQG…GSVAAVEEWL (294 aa)). ATP-binding positions include 216 to 224 (ISQGTFADV), Lys-237, and 337 to 340 (KSSN). The tract at residues 513-539 (SGLSEGTGSSSNTPEETDDVDNSSLDA) is disordered. Residues 516 to 526 (SEGTGSSSNTP) are compositionally biased toward polar residues.

This sequence belongs to the protein kinase superfamily. TKL Ser/Thr protein kinase family. Pelle subfamily. Interacts with MYD88. IL-1 stimulation leads to the formation of a signaling complex which dissociates from the IL-1 receptor following the binding of PELI1.

Its function is as follows. Binds to the IL-1 type I receptor following IL-1 engagement, triggering intracellular signaling cascades leading to transcriptional up-regulation and mRNA stabilization. The protein is Interleukin-1 receptor-associated kinase-like 2 (IRAK2) of Pongo abelii (Sumatran orangutan).